Consider the following 386-residue polypeptide: ORC1-type DNA replication protein 3 (386 aa).

ATP-binding positions include 65-69 and tyrosine 206; that span reads TGKTF.

Belongs to the CDC6/cdc18 family.

Involved in regulation of DNA replication. In Sulfurisphaera tokodaii (strain DSM 16993 / JCM 10545 / NBRC 100140 / 7) (Sulfolobus tokodaii), this protein is ORC1-type DNA replication protein 3 (cdc6-3).